Here is a 400-residue protein sequence, read N- to C-terminus: Acetate kinase (400 aa).

Asparagine 7 contributes to the Mg(2+) binding site. Lysine 14 serves as a coordination point for ATP. Arginine 90 is a substrate binding site. Aspartate 147 serves as the catalytic Proton donor/acceptor. Residues 207 to 211, 282 to 284, and 331 to 335 each bind ATP; these read HLGNG, DFR, and GIGEN. Residue glutamate 384 participates in Mg(2+) binding.

Belongs to the acetokinase family. In terms of assembly, homodimer. The cofactor is Mg(2+). Mn(2+) is required as a cofactor.

Its subcellular location is the cytoplasm. The catalysed reaction is acetate + ATP = acetyl phosphate + ADP. The protein operates within metabolic intermediate biosynthesis; acetyl-CoA biosynthesis; acetyl-CoA from acetate: step 1/2. Catalyzes the formation of acetyl phosphate from acetate and ATP. Can also catalyze the reverse reaction. The chain is Acetate kinase from Thermoanaerobacterium thermosaccharolyticum (strain ATCC 7956 / DSM 571 / NCIMB 9385 / NCA 3814 / NCTC 13789 / WDCM 00135 / 2032) (Clostridium thermosaccharolyticum).